Here is a 589-residue protein sequence, read N- to C-terminus: Transcription factor atf-6 homolog (589 aa).

Positions 1 to 16 (MNFDNTVHESNFDDLL) are enriched in basic and acidic residues. The segment at 1–82 (MNFDNTVHES…SSPPLSCANF (82 aa)) is disordered. Composition is skewed to low complexity over residues 36 to 54 (GTDESQESTSSSSFGFSDQ) and 67 to 78 (GDSSSDSSPPLS). A bZIP domain is found at 250 to 299 (QNRKIRNRMYAQASRMRKKEADEHMKMNLQELLQENEILRTENAALKQRL). A basic motif region spans residues 252 to 275 (RKIRNRMYAQASRMRKKEADEHMK). Residues 271-305 (DEHMKMNLQELLQENEILRTENAALKQRLAFFEHE) adopt a coiled-coil conformation. A leucine-zipper region spans residues 281 to 295 (LLQENEILRTENAAL). Residues 324–344 (IIAAGSVLMMFGLFAVISPFN) form a helical membrane-spanning segment.

The protein belongs to the bZIP family. ATF subfamily.

It is found in the nucleus. It localises to the membrane. Functionally, transcription factor. Plays a role in the unfolded protein response (UPR), perhaps mainly during constitutive endoplasmic reticulum (ER) stress, by activating transcription of genes involved in the UPR. Plays a role in modulating lifespan, acting by positively regulating expression of calcium-binding chaperone crt-1, thereby influencing ER calcium homeostasis. By activating the UPR pathway, confers adaptive protection to subsequent exposure to hypoxia. Involved in protection against proteotoxicity, probably acting via the UPR. Probably acts in the UPR in parallel with the ire-1-xbp-1 and pek-1 pathways. May be regulated by endopeptidase S2P-mediated proteolytic cleavage. This chain is Transcription factor atf-6 homolog, found in Caenorhabditis elegans.